A 549-amino-acid chain; its full sequence is Cytoplasmic trehalase (549 aa).

Substrate contacts are provided by residues R168, W175–D176, N212, R221–Q223, R292–E294, and G324. Active-site proton donor/acceptor residues include D326 and E509. E525 lines the substrate pocket.

It belongs to the glycosyl hydrolase 37 family. Monomer.

It localises to the cytoplasm. It carries out the reaction alpha,alpha-trehalose + H2O = alpha-D-glucose + beta-D-glucose. It participates in glycan degradation; trehalose degradation; D-glucose from alpha,alpha-trehalose: step 1/1. Its function is as follows. Hydrolyzes trehalose to glucose. Could be involved, in cells returning to low osmolarity conditions, in the utilization of the accumulated cytoplasmic trehalose, which was synthesized in response to high osmolarity. The protein is Cytoplasmic trehalase of Salmonella typhi.